A 118-amino-acid chain; its full sequence is Basic phospholipase A2 3 (118 aa).

Disulfide bonds link Cys11-Cys71, Cys27-Cys117, Cys29-Cys45, Cys44-Cys98, Cys51-Cys91, Cys60-Cys84, and Cys78-Cys89. Ca(2+) is bound by residues Tyr28, Gly30, and Gly32. His48 is a catalytic residue. Position 49 (Asp49) interacts with Ca(2+). Asp92 is a catalytic residue.

This sequence belongs to the phospholipase A2 family. Group I subfamily. D49 sub-subfamily. In terms of assembly, monomer. Ca(2+) serves as cofactor. Expressed by the venom gland.

It localises to the secreted. It catalyses the reaction a 1,2-diacyl-sn-glycero-3-phosphocholine + H2O = a 1-acyl-sn-glycero-3-phosphocholine + a fatty acid + H(+). Its function is as follows. PLA2 catalyzes the calcium-dependent hydrolysis of the 2-acyl groups in 3-sn-phosphoglycerides. The protein is Basic phospholipase A2 3 of Laticauda semifasciata (Black-banded sea krait).